A 97-amino-acid chain; its full sequence is MSVNIKPLEDRIVVKPLDAEQTTASGLVIPDTAKEKPQEGEVLAIGPGRIDDNGNRVPLDVTVGDKVIYSKYGGTEVKYAGEEYLILSARDVLAVVS.

This sequence belongs to the GroES chaperonin family. Heptamer of 7 subunits arranged in a ring. Interacts with the chaperonin GroEL.

The protein localises to the cytoplasm. Its function is as follows. Together with the chaperonin GroEL, plays an essential role in assisting protein folding. The GroEL-GroES system forms a nano-cage that allows encapsulation of the non-native substrate proteins and provides a physical environment optimized to promote and accelerate protein folding. GroES binds to the apical surface of the GroEL ring, thereby capping the opening of the GroEL channel. The polypeptide is Co-chaperonin GroES (Nocardioides sp. (strain ATCC BAA-499 / JS614)).